A 787-amino-acid chain; its full sequence is LPS-assembly protein LptD (787 aa).

An N-terminal signal peptide occupies residues 1–39 (MPPKTLFPLVPACDAAPRKKRLAVALLAVPGLVPAVSQA).

Belongs to the LptD family. In terms of assembly, component of the lipopolysaccharide transport and assembly complex. Interacts with LptE and LptA.

It is found in the cell outer membrane. In terms of biological role, together with LptE, is involved in the assembly of lipopolysaccharide (LPS) at the surface of the outer membrane. The chain is LPS-assembly protein LptD from Burkholderia pseudomallei (strain 1710b).